A 351-amino-acid polypeptide reads, in one-letter code: MTLEAIKYKSGQLQILDQLLLPAESKYIPVAGVKDGWSAIHKMQVRGAPAIAIVGCLSLVVEIYDKQYETKAALANEIGEHLQYLVTSRPTAVNLKLAADDVKGQVESLLANETVTVDGMKQEVIKAIEYMLEKDISDNRAIGDNGANVLVKGVDRPLKLLTHCNTGSLATAGYGTALGVIRSVNERNLLEHVYCTETRPYNQGARLTAYELVHDKLPATLVTDSMVAALLNSRKIDAIIVGADRVAANGDTANKIGTYQMAVVAKHHGVPFYVAAPFTSIDVAIEDGSHIKIEERPEHELTHIGGQRIAAPGIGCWNPAFDVTPAELITGIITERGVLKPCELAEKVRQK.

D244 (proton donor) is an active-site residue.

Belongs to the eIF-2B alpha/beta/delta subunits family. MtnA subfamily.

It is found in the cytoplasm. Its subcellular location is the nucleus. The catalysed reaction is 5-(methylsulfanyl)-alpha-D-ribose 1-phosphate = 5-(methylsulfanyl)-D-ribulose 1-phosphate. It participates in amino-acid biosynthesis; L-methionine biosynthesis via salvage pathway; L-methionine from S-methyl-5-thio-alpha-D-ribose 1-phosphate: step 1/6. Catalyzes the interconversion of methylthioribose-1-phosphate (MTR-1-P) into methylthioribulose-1-phosphate (MTRu-1-P). The chain is Methylthioribose-1-phosphate isomerase from Anopheles gambiae (African malaria mosquito).